The following is a 123-amino-acid chain: Large ribosomal subunit protein bL17 (123 aa).

It belongs to the bacterial ribosomal protein bL17 family. In terms of assembly, part of the 50S ribosomal subunit. Contacts protein L32.

The chain is Large ribosomal subunit protein bL17 from Borrelia hermsii (strain HS1 / DAH).